The following is a 623-amino-acid chain: AFI1-like protein C776.06c (623 aa).

One can recognise a uDENN domain in the interval 5–204 (DYLLTAIFDP…IDNIPKPGSE (200 aa)). The cDENN domain maps to 248 to 386 (ISNLINTFID…SDATTTMDTK (139 aa)). The region spanning 388–476 (LFNNTSPFTP…WSWDNDDEKV (89 aa)) is the dDENN domain.

This sequence belongs to the AFI1/mesA family.

The protein localises to the cytoplasm. It is found in the cell cortex. The protein resides in the nucleus. Involved in polarity establishment. The sequence is that of AFI1-like protein C776.06c from Schizosaccharomyces pombe (strain 972 / ATCC 24843) (Fission yeast).